Consider the following 134-residue polypeptide: Small ribosomal subunit protein uS11 (134 aa).

This sequence belongs to the universal ribosomal protein uS11 family. As to quaternary structure, part of the 30S ribosomal subunit. Interacts with proteins S7 and S18. Binds to IF-3.

In terms of biological role, located on the platform of the 30S subunit, it bridges several disparate RNA helices of the 16S rRNA. Forms part of the Shine-Dalgarno cleft in the 70S ribosome. The chain is Small ribosomal subunit protein uS11 from Janthinobacterium sp. (strain Marseille) (Minibacterium massiliensis).